Here is a 1208-residue protein sequence, read N- to C-terminus: Chromosome partition protein Smc (1208 aa).

32 to 39 contacts ATP; sequence PNGCGKSN. 3 coiled-coil regions span residues 170 to 205, 239 to 504, and 694 to 1054; these read VTKY…GERI, EARA…ARVQ, and VIER…QLQD.

This sequence belongs to the SMC family. In terms of assembly, homodimer.

Its subcellular location is the cytoplasm. In terms of biological role, required for chromosome condensation and partitioning. This chain is Chromosome partition protein Smc, found in Thauera aminoaromatica.